A 132-amino-acid chain; its full sequence is L-ectoine synthase (132 aa).

It belongs to the ectoine synthase family.

The enzyme catalyses (2S)-4-acetamido-2-aminobutanoate = L-ectoine + H2O. The protein operates within amine and polyamine biosynthesis; ectoine biosynthesis; L-ectoine from L-aspartate 4-semialdehyde: step 3/3. Catalyzes the circularization of gamma-N-acetyl-alpha,gamma-diaminobutyric acid (ADABA) to ectoine (1,4,5,6-tetrahydro-2-methyl-4-pyrimidine carboxylic acid), which is an excellent osmoprotectant. This Saccharophagus degradans (strain 2-40 / ATCC 43961 / DSM 17024) protein is L-ectoine synthase.